Reading from the N-terminus, the 942-residue chain is Valine--tRNA ligase (942 aa).

Residues 43–53 (PNVTGTLHMGH) carry the 'HIGH' region motif. A 'KMSKS' region motif is present at residues 551–555 (KMSKS). Residue K554 participates in ATP binding. Residues 876 to 942 (EGLVDLDAER…AGLREQRAKL (67 aa)) adopt a coiled-coil conformation.

It belongs to the class-I aminoacyl-tRNA synthetase family. ValS type 1 subfamily. Monomer.

It localises to the cytoplasm. It carries out the reaction tRNA(Val) + L-valine + ATP = L-valyl-tRNA(Val) + AMP + diphosphate. Its function is as follows. Catalyzes the attachment of valine to tRNA(Val). As ValRS can inadvertently accommodate and process structurally similar amino acids such as threonine, to avoid such errors, it has a 'posttransfer' editing activity that hydrolyzes mischarged Thr-tRNA(Val) in a tRNA-dependent manner. The sequence is that of Valine--tRNA ligase from Stenotrophomonas maltophilia (strain R551-3).